The following is a 206-amino-acid chain: Heat shock protein beta-1 (206 aa).

At Arg-12 the chain carries Omega-N-methylarginine. Position 13 is a phosphoserine (Ser-13). Ser-15 is modified (phosphoserine; by MAPKAPK2 and MAPKAPK3). Ser-27 bears the Phosphoserine mark. The tract at residues Arg-74–Lys-206 is interaction with TGFB1I1. The region spanning Ala-80 to Thr-188 is the sHSP domain. Ser-86 is modified (phosphoserine; by MAPKAPK2, MAPKAPK3 and MAPKAPK5). Ser-87, Ser-90, and Ser-102 each carry phosphoserine. Lys-127 bears the N6-acetyllysine mark. Thr-178 carries the phosphothreonine modification. A phosphoserine mark is found at Ser-180 and Ser-200.

The protein belongs to the small heat shock protein (HSP20) family. Homooligomer. Homodimer; becomes monomeric upon activation. Heterooligomer; with HSPB6. Associates with alpha- and beta-tubulin. Interacts with TGFB1I1. Interacts with CRYAB. Interacts with HSPB8. Interacts with HSPBAP1. Phosphorylated upon exposure to protein kinase C activators and heat shock. Phosphorylation by MAPKAPK2 and MAPKAPK3 in response to stress dissociates HSPB1 from large small heat-shock protein (sHsps) oligomers and impairs its chaperone activity and ability to protect against oxidative stress effectively. Phosphorylation by MAPKAPK5 in response to PKA stimulation induces F-actin rearrangement. In terms of tissue distribution, expressed in a variety of tissues. High levels in lung, adrenal, xiphoid, adipose tissue, heart and striated and smooth muscle, lower levels in the CNS. Adult levels are much higher in the slow-twitch soleus muscle than in the fast-twitch rectus femoris and extensor digitorum muscles.

The protein resides in the cytoplasm. It localises to the nucleus. It is found in the cytoskeleton. Its subcellular location is the spindle. Its function is as follows. Small heat shock protein which functions as a molecular chaperone probably maintaining denatured proteins in a folding-competent state. Plays a role in stress resistance and actin organization. Through its molecular chaperone activity may regulate numerous biological processes including the phosphorylation and the axonal transport of neurofilament proteins. This Rattus norvegicus (Rat) protein is Heat shock protein beta-1 (Hspb1).